A 490-amino-acid polypeptide reads, in one-letter code: COP9 signalosome complex subunit 2 (490 aa).

Over residues 1–30 (MSDDDFMQDSDQEYDFEYEDDEEEDTGDVD) the composition is skewed to acidic residues. The interval 1 to 32 (MSDDDFMQDSDQEYDFEYEDDEEEDTGDVDIE) is disordered. The region spanning 250–418 (SEENWKEAQS…GVLELESRED (169 aa)) is the PCI domain. Positions 469–490 (DTMRSMGSGKRGRRVGLTQRAY) are disordered.

The protein belongs to the CSN2 family. As to quaternary structure, component of the COP9 signalosome (CSN) complex.

It is found in the cytoplasm. It localises to the nucleus. Its function is as follows. Component of the COP9 signalosome (CSN) complex that acts as an regulator of the ubiquitin (Ubl) conjugation pathway by mediating the deneddylation of the cullin subunit of SCF-type E3 ubiquitin-protein ligase complexes. The CSN complex is involved in the regulation of the circadian clock through its control of the stability of the SCF(FWD-1) complex. The chain is COP9 signalosome complex subunit 2 (csn-2) from Neurospora crassa (strain ATCC 24698 / 74-OR23-1A / CBS 708.71 / DSM 1257 / FGSC 987).